A 474-amino-acid chain; its full sequence is Shugoshin-1 (474 aa).

Disordered stretches follow at residues 1–53 (MTST…KPNA), 189–226 (VESQSAVSSNTVCQEPPQDGKQKRMPQRRRSSRLNQGS), 322–356 (NSKQNHLTGSQSSLSFNTVDTPEPPEDNTVKRCSK), and 422–442 (VSMEQRTNQEQDGDCFSRKSN). Polar residues-rich tracts occupy residues 12-22 (GSLNPPHSNPS) and 190-201 (ESQSAVSSNTVC). The span at 211 to 220 (KRMPQRRRSS) shows a compositional bias: basic residues. Polar residues-rich tracts occupy residues 322-341 (NSKQNHLTGSQSSLSFNTVD) and 422-431 (VSMEQRTNQE).

The protein belongs to the shugoshin family. Highly expressed in tissues containing meiocytes. Expressed at much lower level in leaves and pollen-containing flowers.

It is found in the nucleus. It localises to the chromosome. Its subcellular location is the centromere. In terms of biological role, plays a central role in chromosome cohesion during meiosis I by preventing premature dissociation of cohesin complex from centromeres after prophase, when most of cohesin complex dissociates from chromosomes arms. Required for maintenance of centromeric cohesion before prophase II and correct segregation of chromatids during meiosis II. Has apparently no function in mitosis. The protein is Shugoshin-1 of Zea mays (Maize).